Reading from the N-terminus, the 522-residue chain is Protein nucleotidyltransferase YdiU (522 aa).

Residues G109, G111, R112, K132, D144, G145, R195, and R202 each contribute to the ATP site. D271 serves as the catalytic Proton acceptor. Mg(2+)-binding residues include N272 and D281. An ATP-binding site is contributed by D281.

Belongs to the SELO family. Requires Mg(2+) as cofactor. Mn(2+) serves as cofactor.

It catalyses the reaction L-seryl-[protein] + ATP = 3-O-(5'-adenylyl)-L-seryl-[protein] + diphosphate. The catalysed reaction is L-threonyl-[protein] + ATP = 3-O-(5'-adenylyl)-L-threonyl-[protein] + diphosphate. The enzyme catalyses L-tyrosyl-[protein] + ATP = O-(5'-adenylyl)-L-tyrosyl-[protein] + diphosphate. It carries out the reaction L-histidyl-[protein] + UTP = N(tele)-(5'-uridylyl)-L-histidyl-[protein] + diphosphate. It catalyses the reaction L-seryl-[protein] + UTP = O-(5'-uridylyl)-L-seryl-[protein] + diphosphate. The catalysed reaction is L-tyrosyl-[protein] + UTP = O-(5'-uridylyl)-L-tyrosyl-[protein] + diphosphate. Nucleotidyltransferase involved in the post-translational modification of proteins. It can catalyze the addition of adenosine monophosphate (AMP) or uridine monophosphate (UMP) to a protein, resulting in modifications known as AMPylation and UMPylation. This is Protein nucleotidyltransferase YdiU from Burkholderia multivorans (strain ATCC 17616 / 249).